The following is a 48-amino-acid chain: Hemoglobin subunit beta-B (48 aa).

The Globin domain occupies 2 to 48; that stretch reads EWTDAERGAILSLWGKIDPDELGPALLARXXLVYXXTQRYFASFGDL.

The protein belongs to the globin family. Heterotetramer of two alpha chains and two beta chains. In terms of tissue distribution, red blood cells.

Its function is as follows. Involved in oxygen transport from gills to the various peripheral tissues. The chain is Hemoglobin subunit beta-B from Catostomus clarkii (Desert sucker).